An 81-amino-acid polypeptide reads, in one-letter code: Short neurotoxin 1 (81 aa).

Residues Met-1–Thr-21 form the signal peptide. Intrachain disulfides connect Cys-24–Cys-43, Cys-38–Cys-60, Cys-62–Cys-73, and Cys-74–Cys-79.

Belongs to the three-finger toxin family. Short-chain subfamily. Type I alpha-neurotoxin sub-subfamily. In terms of tissue distribution, expressed by the venom gland.

It localises to the secreted. In terms of biological role, binds to muscle nicotinic acetylcholine receptor (nAChR) and inhibit acetylcholine from binding to the receptor, thereby impairing neuromuscular transmission. This chain is Short neurotoxin 1, found in Cryptophis nigrescens (Eastern small-eyed snake).